The sequence spans 717 residues: Cleavage stimulation factor subunit 3 (717 aa).

Serine 2 bears the N-acetylserine mark. 9 HAT repeats span residues 45-77 (QPIDKARKTYERLVAQFPSSGRFWKLYIEAEIK), 79-110 (KNYDKVEKLFQRCLMKVLHIDLWKCYLSYVRE), 117-152 (SYKEKMAQAYDFALDKIGMEIMSYQIWVDYINFLKG), 163-196 (QRITAVRRVYQRGCVNPMINIEQLWRDYNKYEEG), 221-261 (KEYE…WEKS), 271-303 (LITKRVMFAYEQCLLVLGHHPDIWYEAAQYLEQ), 319-352 (LFSDEAANIYERAISTLLKKNMLLYFAYADYEES), 354-387 (MKYEKVHSIYNRLLAIEDIDPTLVYIQYMKFARR), and 458-494 (NEDNNTRVLFERVLTSGSLPPEKSGEIWARFLAFESN). Positions 683-704 (AVKRPNEDSDEDEEKGAVVPPV) are disordered. Residue serine 691 is modified to Phosphoserine.

As to quaternary structure, homodimer. The CSTF complex is composed of CSTF1 (50 kDa subunit), CSTF2 (64 kDa subunit) and CSTF3 (77 kDa subunit). CSTF3 directly interacts with CSTF1 and CSTF2. Interacts with FIP1L1.

The protein resides in the nucleus. Functionally, one of the multiple factors required for polyadenylation and 3'-end cleavage of mammalian pre-mRNAs. The sequence is that of Cleavage stimulation factor subunit 3 (Cstf3) from Mus musculus (Mouse).